We begin with the raw amino-acid sequence, 445 residues long: MLFAEKNILSVSQLTGLVRNVLEDNFDHVWVEGEVSNLATPGSGHLYFTLKDASAQLRCVMFRASVRALKFKPSDGMGLIARGRLSVFDARGEYQLIVEYLEPKGIGALQLAFIQLKERLAKEGLFSDSHKKDIPRLPQRIGIVTSATGAAIHDILNVLNRRFANVQVLLRPVKVQGEGAAEEIAAAVNDLNRYGSIDVMIVGRGGGSLEDLWAFNEEIVARAIYRSSIPVISAVGHEIDFTISDFVADLRAPTPSAAAEMVIKSKAEISAELEALFHRLGMAVRRLLNEHWGELNGLVRAVKDPSMLLGHLAQRLDDLEGRSWRCIRQLLIRSADTNHFLHDRLRLQNPVLRLERCREQLLLVQSRIEKTMMHTVERAGQSLAFNAGKLQALSPLATMARGYSIVKKLPGGAVVTDRDQLAPGDSLDILLRKGRAICRVECTHD.

It belongs to the XseA family. Heterooligomer composed of large and small subunits.

The protein resides in the cytoplasm. The enzyme catalyses Exonucleolytic cleavage in either 5'- to 3'- or 3'- to 5'-direction to yield nucleoside 5'-phosphates.. Its function is as follows. Bidirectionally degrades single-stranded DNA into large acid-insoluble oligonucleotides, which are then degraded further into small acid-soluble oligonucleotides. The protein is Exodeoxyribonuclease 7 large subunit of Geotalea daltonii (strain DSM 22248 / JCM 15807 / FRC-32) (Geobacter daltonii).